Here is a 476-residue protein sequence, read N- to C-terminus: Bifunctional protein HldE (476 aa).

The tract at residues methionine 1 to threonine 318 is ribokinase. Asparagine 195–glutamate 198 is a binding site for ATP. The active site involves aspartate 264. Residues methionine 344–glycine 476 are cytidylyltransferase.

The protein in the N-terminal section; belongs to the carbohydrate kinase PfkB family. This sequence in the C-terminal section; belongs to the cytidylyltransferase family. Homodimer.

It carries out the reaction D-glycero-beta-D-manno-heptose 7-phosphate + ATP = D-glycero-beta-D-manno-heptose 1,7-bisphosphate + ADP + H(+). It catalyses the reaction D-glycero-beta-D-manno-heptose 1-phosphate + ATP + H(+) = ADP-D-glycero-beta-D-manno-heptose + diphosphate. The protein operates within nucleotide-sugar biosynthesis; ADP-L-glycero-beta-D-manno-heptose biosynthesis; ADP-L-glycero-beta-D-manno-heptose from D-glycero-beta-D-manno-heptose 7-phosphate: step 1/4. It functions in the pathway nucleotide-sugar biosynthesis; ADP-L-glycero-beta-D-manno-heptose biosynthesis; ADP-L-glycero-beta-D-manno-heptose from D-glycero-beta-D-manno-heptose 7-phosphate: step 3/4. Functionally, catalyzes the phosphorylation of D-glycero-D-manno-heptose 7-phosphate at the C-1 position to selectively form D-glycero-beta-D-manno-heptose-1,7-bisphosphate. Catalyzes the ADP transfer from ATP to D-glycero-beta-D-manno-heptose 1-phosphate, yielding ADP-D-glycero-beta-D-manno-heptose. The protein is Bifunctional protein HldE of Vibrio atlanticus (strain LGP32) (Vibrio splendidus (strain Mel32)).